The chain runs to 219 residues: AA11 family lytic polysaccharide monooxygenase A (219 aa).

The first 18 residues, 1–18, serve as a signal peptide directing secretion; it reads MMLSKVVMGLLTASLAAA. H19 is a Cu(+) binding site. 3 disulfide bridges follow: C58–C154, C94–C116, and C185–C218. The N-linked (GlcNAc...) asparagine glycan is linked to N80. H89 lines the Cu(+) pocket.

This sequence belongs to the polysaccharide monooxygenase AA11 family. Requires Cu(2+) as cofactor.

Lytic polysaccharide monooxygenase (LPMO) that depolymerizes chitin via the oxidation of scissile beta-(1-4)-glycosidic bonds, yielding C1 or C4 oxidation products. Catalysis by LPMOs requires the reduction of the active-site copper from Cu(II) to Cu(I) by a reducing agent and H(2)O(2) or O(2) as a cosubstrate. Has considerable affinity for alpha-chitin and, more so, beta-chitin. Active toward both alpha-chitin and beta-chitin allomorphs and enhances chitin degradation by an endoacting chitinase, in particular for alpha-chitin, and so plays a role in fungal chitin turnover. The catalytic activity increases when supplying reactions with hydrogen peroxide, confirming that it has peroxygenase activity. Does not show activity on phosphoric acid-swollen cellulose (PASC), Avicel, tamarind xyloglucan, birchwood xylan, beechwood xylan, acetyl glucuronoxylan from aspen, ivory nut mannan, acetylated konjac glucomannan, potato starch, heparin, hyaluronic acid, and chitosan. The chain is AA11 family lytic polysaccharide monooxygenase A from Aspergillus fumigatus (strain CBS 144.89 / FGSC A1163 / CEA10) (Neosartorya fumigata).